Here is a 165-residue protein sequence, read N- to C-terminus: Crossover junction endodeoxyribonuclease RuvC (165 aa).

Residues Asp7, Glu68, and His142 contribute to the active site. The Mg(2+) site is built by Asp7, Glu68, and His142.

This sequence belongs to the RuvC family. Homodimer which binds Holliday junction (HJ) DNA. The HJ becomes 2-fold symmetrical on binding to RuvC with unstacked arms; it has a different conformation from HJ DNA in complex with RuvA. In the full resolvosome a probable DNA-RuvA(4)-RuvB(12)-RuvC(2) complex forms which resolves the HJ. Mg(2+) serves as cofactor.

The protein resides in the cytoplasm. It catalyses the reaction Endonucleolytic cleavage at a junction such as a reciprocal single-stranded crossover between two homologous DNA duplexes (Holliday junction).. Its function is as follows. The RuvA-RuvB-RuvC complex processes Holliday junction (HJ) DNA during genetic recombination and DNA repair. Endonuclease that resolves HJ intermediates. Cleaves cruciform DNA by making single-stranded nicks across the HJ at symmetrical positions within the homologous arms, yielding a 5'-phosphate and a 3'-hydroxyl group; requires a central core of homology in the junction. The consensus cleavage sequence is 5'-(A/T)TT(C/G)-3'. Cleavage occurs on the 3'-side of the TT dinucleotide at the point of strand exchange. HJ branch migration catalyzed by RuvA-RuvB allows RuvC to scan DNA until it finds its consensus sequence, where it cleaves and resolves the cruciform DNA. The chain is Crossover junction endodeoxyribonuclease RuvC from Anaplasma marginale (strain Florida).